A 505-amino-acid polypeptide reads, in one-letter code: uncharacterized protein (505 aa).

14 helical membrane passes run 9 to 29, 49 to 69, 86 to 106, 122 to 142, 156 to 176, 181 to 201, 235 to 255, 261 to 281, 310 to 330, 341 to 361, 371 to 391, 395 to 415, 435 to 455, and 464 to 484; these read ANLT…PFIV, YFSV…SVAA, AASV…AFFI, LSIL…GFGA, IQAV…ACFA, QIQL…FYFF, IGVL…LGAS, AAII…ASLF, LLLA…LTIW, LLFI…LFYI, PAIV…TLSG, LGLY…NAIF, IIGP…IQFI, and LIAT…MLVC.

It localises to the cell membrane. May be involved in the production of the exopolysaccharide (EPS) component of the extracellular matrix during biofilm formation. EPS is responsible for the adhesion of chains of cells into bundles. This is an uncharacterized protein from Bacillus subtilis (strain 168).